A 350-amino-acid polypeptide reads, in one-letter code: Ion-translocating oxidoreductase complex subunit D (350 aa).

5 helical membrane passes run 20-40 (VMVL…YFFG), 44-64 (LIQI…ILKI), 68-88 (PVLN…LAIS), 89-109 (IPPL…IIFV), and 125-145 (MAGY…WLPV). Threonine 187 is subject to FMN phosphoryl threonine. A run of 5 helical transmembrane segments spans residues 215 to 235 (SWQQ…ILLF), 241 to 261 (WHIP…AFAY), 267 to 287 (APPL…FILS), 300 to 320 (ILYA…GGYP), and 322 to 342 (AVAF…YYTQ).

It belongs to the NqrB/RnfD family. As to quaternary structure, the complex is composed of six subunits: RnfA, RnfB, RnfC, RnfD, RnfE and RnfG. FMN is required as a cofactor.

Its subcellular location is the cell inner membrane. In terms of biological role, part of a membrane-bound complex that couples electron transfer with translocation of ions across the membrane. This chain is Ion-translocating oxidoreductase complex subunit D, found in Psychromonas ingrahamii (strain DSM 17664 / CCUG 51855 / 37).